The chain runs to 228 residues: Ureidoacrylate amidohydrolase RutB (228 aa).

D23 acts as the Proton acceptor in catalysis. Residue K132 is part of the active site. C165 functions as the Nucleophile in the catalytic mechanism.

It belongs to the isochorismatase family. RutB subfamily.

The enzyme catalyses (Z)-3-ureidoacrylate + H2O + H(+) = (Z)-3-aminoacrylate + NH4(+) + CO2. The catalysed reaction is (Z)-3-ureidoacrylate + H2O = (Z)-3-aminoacrylate + carbamate + H(+). It catalyses the reaction (Z)-2-methylureidoacrylate + H2O + H(+) = (Z)-2-methylaminoacrylate + NH4(+) + CO2. In terms of biological role, hydrolyzes ureidoacrylate to form aminoacrylate and carbamate. The carbamate hydrolyzes spontaneously, thereby releasing one of the nitrogen atoms of the pyrimidine ring as ammonia and one of its carbon atoms as CO2. This is Ureidoacrylate amidohydrolase RutB from Agrobacterium fabrum (strain C58 / ATCC 33970) (Agrobacterium tumefaciens (strain C58)).